We begin with the raw amino-acid sequence, 277 residues long: Urease accessory protein UreD (277 aa).

The protein belongs to the UreD family. As to quaternary structure, ureD, UreF and UreG form a complex that acts as a GTP-hydrolysis-dependent molecular chaperone, activating the urease apoprotein by helping to assemble the nickel containing metallocenter of UreC. The UreE protein probably delivers the nickel.

The protein localises to the cytoplasm. Required for maturation of urease via the functional incorporation of the urease nickel metallocenter. The polypeptide is Urease accessory protein UreD (Sinorhizobium medicae (strain WSM419) (Ensifer medicae)).